Here is a 149-residue protein sequence, read N- to C-terminus: Lipoprotein MlpF (149 aa).

The first 17 residues, 1–17, serve as a signal peptide directing secretion; that stretch reads MKIINILFCLFLLLLNS. Cys-18 is lipidated: N-palmitoyl cysteine. Cys-18 is lipidated: S-diacylglycerol cysteine. Residues 26–58 are disordered; sequence LKNNAQQTKSRGKRDLTQKEATPEKPKSKEELL. Positions 38-58 are enriched in basic and acidic residues; that stretch reads KRDLTQKEATPEKPKSKEELL.

It belongs to the Multicopy lipoprotein (Mlp) family.

It localises to the cell outer membrane. Its function is as follows. An outer membrane protein that may participate in pathogenesis. Some human Lyme disease patients have antibodies against this protein. The Mlp proteins probably undergo intragenic recombination, generating new alleles. The protein is Lipoprotein MlpF of Borreliella burgdorferi (strain ATCC 35210 / DSM 4680 / CIP 102532 / B31) (Borrelia burgdorferi).